The sequence spans 484 residues: Nuclear rim protein 1 (484 aa).

Phosphoserine is present on serine 3. A run of 2 helical transmembrane segments spans residues 145–165 (FTIFILLSLNLYVSCKFMFGY) and 237–257 (IPTNFIINLFVSFSPTAIVFL). A disordered region spans residues 416-457 (SSNENLEKGGAFLPNQDQNRPSKSLSPLRKTPLSARQKRFEG). Serine 417 is modified (phosphoserine). Residues 430-440 (NQDQNRPSKSL) are compositionally biased toward polar residues. Residue serine 474 is modified to Phosphoserine.

The protein belongs to the NUR1 family. In terms of assembly, interacts with CSM1.

It localises to the nucleus membrane. Member of a perinuclear network that controls recombination at multiple loci to maintain genome stability. Required for rDNA repeat stability. The protein is Nuclear rim protein 1 (NUR1) of Saccharomyces cerevisiae (strain JAY291) (Baker's yeast).